The primary structure comprises 477 residues: Cysteine--tRNA ligase (477 aa).

Residue Cys28 participates in Zn(2+) binding. The short motif at 30–40 (PTVYDYAHIGN) is the 'HIGH' region element. 3 residues coordinate Zn(2+): Cys213, His238, and Glu242. Positions 270–274 (KMSKS) match the 'KMSKS' region motif. Position 273 (Lys273) interacts with ATP.

It belongs to the class-I aminoacyl-tRNA synthetase family. In terms of assembly, monomer. Requires Zn(2+) as cofactor.

Its subcellular location is the cytoplasm. The catalysed reaction is tRNA(Cys) + L-cysteine + ATP = L-cysteinyl-tRNA(Cys) + AMP + diphosphate. This chain is Cysteine--tRNA ligase, found in Chlamydia trachomatis serovar A (strain ATCC VR-571B / DSM 19440 / HAR-13).